Reading from the N-terminus, the 82-residue chain is Costars family protein v1g158749 (82 aa).

The protein belongs to the costars family.

This Nematostella vectensis (Starlet sea anemone) protein is Costars family protein v1g158749.